The primary structure comprises 100 residues: Small ribosomal subunit protein uS14 (100 aa).

The protein belongs to the universal ribosomal protein uS14 family. As to quaternary structure, part of the 30S ribosomal subunit. Contacts proteins S3 and S10.

Its function is as follows. Binds 16S rRNA, required for the assembly of 30S particles and may also be responsible for determining the conformation of the 16S rRNA at the A site. In Prochlorococcus marinus (strain NATL2A), this protein is Small ribosomal subunit protein uS14.